A 446-amino-acid chain; its full sequence is Enolase (446 aa).

Position 42 (S42) interacts with Mg(2+). S42 bears the Phosphoserine mark. The short motif at 104-108 (EWGWS) is the Pentapeptide insert element. Position 133 is an N6-acetyllysine (K133). Residue K138 forms a Glycyl lysine isopeptide (Lys-Gly) (interchain with G-Cter in ubiquitin) linkage. Y139 bears the Phosphotyrosine mark. Substrate is bound by residues H166 and E175. E218 functions as the Proton donor in the catalytic mechanism. D253 contributes to the Mg(2+) binding site. Positions 277 to 282 (DKSLVK) match the DKSLVK motif motif. Mg(2+) is bound by residues E304 and D331. Substrate contacts are provided by E304 and D331. T339 bears the Phosphothreonine mark. Residue K356 is the Proton acceptor of the active site. K375 carries the N6-acetyllysine modification. Substrate is bound by residues 383-386 (SHRS) and K407.

It belongs to the enolase family. Homodimer. Forms a complex at least composed of DegP, ENO and HSP70. Interacts with G-actin. Interacts (via the DKSLVK motif) with mammalian host PLG/plasminogen (present in the mosquito blood meal); the interaction occurs at the ookinete cell surface and is required for ookinete invasion of the mosquito midgut. Interacts with A.gambiae EBP; depending on the Plasmodium species, the interaction is either involved in ookinete invasion of the mosquito midgut (P.berghei) or is dispensable (P.falciparum). Requires Mg(2+) as cofactor.

The protein localises to the cytoplasm. It is found in the nucleus. Its subcellular location is the cytoskeleton. It localises to the cell surface. The protein resides in the cell membrane. The protein localises to the vacuole. It catalyses the reaction (2R)-2-phosphoglycerate = phosphoenolpyruvate + H2O. Its pathway is carbohydrate degradation; glycolysis; pyruvate from D-glyceraldehyde 3-phosphate: step 4/5. Functionally, glycolytic enzyme that catalyzes the conversion of 2-phosphoglycerate to phosphoenolpyruvate. In addition to glycolysis, involved in various processes such as parasite development and invasion. Plays an essential role during ookinete invasion of the mosquito vector midgut by mediating the interaction of the ookinete with the midgut epithelium and, further, by binding to mammalian host plasminogen in the blood meal, whose conversion to active plasmin promotes the invasion process. This chain is Enolase, found in Plasmodium falciparum.